A 192-amino-acid chain; its full sequence is Thymidylate kinase (192 aa).

7–14 (GIDCVGKS) contributes to the ATP binding site.

It belongs to the thymidylate kinase family.

The catalysed reaction is dTMP + ATP = dTDP + ADP. In terms of biological role, phosphorylation of dTMP to form dTDP in both de novo and salvage pathways of dTTP synthesis. The protein is Thymidylate kinase of Campylobacter jejuni subsp. jejuni serotype O:6 (strain 81116 / NCTC 11828).